The following is a 292-amino-acid chain: 4-hydroxy-tetrahydrodipicolinate synthase (292 aa).

Residue T45 participates in pyruvate binding. The active-site Proton donor/acceptor is Y133. Catalysis depends on K161, which acts as the Schiff-base intermediate with substrate. I203 is a pyruvate binding site.

It belongs to the DapA family. In terms of assembly, homodimer.

It is found in the cytoplasm. It catalyses the reaction L-aspartate 4-semialdehyde + pyruvate = (2S,4S)-4-hydroxy-2,3,4,5-tetrahydrodipicolinate + H2O + H(+). Its pathway is amino-acid biosynthesis; L-lysine biosynthesis via DAP pathway; (S)-tetrahydrodipicolinate from L-aspartate: step 3/4. In terms of biological role, catalyzes the condensation of (S)-aspartate-beta-semialdehyde [(S)-ASA] and pyruvate to 4-hydroxy-tetrahydrodipicolinate (HTPA). The sequence is that of 4-hydroxy-tetrahydrodipicolinate synthase from Pseudomonas savastanoi pv. phaseolicola (strain 1448A / Race 6) (Pseudomonas syringae pv. phaseolicola (strain 1448A / Race 6)).